Here is a 66-residue protein sequence, read N- to C-terminus: U-scoloptoxin(24)-Er2a (66 aa).

The N-terminal stretch at 1-23 (MVKPLHCLIGIVLFLAVLNAGNG) is a signal peptide. The segment at 43–66 (SLFHGNQRKKRSEEKRFSDMEQTK) is disordered. The span at 53-66 (RSEEKRFSDMEQTK) shows a compositional bias: basic and acidic residues.

This sequence belongs to the scoloptoxin-24 family. As to expression, expressed by the venom gland.

The protein localises to the secreted. This chain is U-scoloptoxin(24)-Er2a, found in Ethmostigmus rubripes (Giant centipede).